The following is a 260-amino-acid chain: Thiazole synthase (260 aa).

Catalysis depends on lysine 96, which acts as the Schiff-base intermediate with DXP. 1-deoxy-D-xylulose 5-phosphate contacts are provided by residues glycine 157, 184 to 185 (AG), and 206 to 207 (NT).

Belongs to the ThiG family. In terms of assembly, homotetramer. Forms heterodimers with either ThiH or ThiS.

Its subcellular location is the cytoplasm. It carries out the reaction [ThiS sulfur-carrier protein]-C-terminal-Gly-aminoethanethioate + 2-iminoacetate + 1-deoxy-D-xylulose 5-phosphate = [ThiS sulfur-carrier protein]-C-terminal Gly-Gly + 2-[(2R,5Z)-2-carboxy-4-methylthiazol-5(2H)-ylidene]ethyl phosphate + 2 H2O + H(+). It functions in the pathway cofactor biosynthesis; thiamine diphosphate biosynthesis. Catalyzes the rearrangement of 1-deoxy-D-xylulose 5-phosphate (DXP) to produce the thiazole phosphate moiety of thiamine. Sulfur is provided by the thiocarboxylate moiety of the carrier protein ThiS. In vitro, sulfur can be provided by H(2)S. This chain is Thiazole synthase, found in Rhodopseudomonas palustris (strain HaA2).